The primary structure comprises 123 residues: Urotensin-2 (123 aa).

An N-terminal signal peptide occupies residues 1–20; the sequence is MDRVPFCCLLFIGLLNPLLS. 2 propeptides span residues 21–104 and 107–109; these read LPVT…LART and QHK. The tract at residues 57-88 is disordered; it reads RQTMGTEAGESPGEAGPSTETPTPRGSMRKAF. Cys117 and Cys122 are joined by a disulfide.

This sequence belongs to the urotensin-2 family. Brain specific. Predominantly expressed in motoneurons of the brainstem and spinal cord.

The protein localises to the secreted. Highly potent vasoconstrictor. In Mus musculus (Mouse), this protein is Urotensin-2 (Uts2).